The following is a 355-amino-acid chain: Mitochondrial import inner membrane translocase subunit TIM50 (355 aa).

The transit peptide at 1 to 44 (MAASAAVFLRLRSGLRQGARGLCARLATPPPRAPDQAAEIGSRA) directs the protein to the mitochondrion. The tract at residues 25–61 (RLATPPPRAPDQAAEIGSRAGTKAQTQGPQQQRSSEG) is disordered. Residues 45–67 (GTKAQTQGPQQQRSSEGPSYAKK) lie on the Mitochondrial matrix side of the membrane. Over residues 47-61 (KAQTQGPQQQRSSEG) the composition is skewed to polar residues. A helical membrane pass occupies residues 68-88 (VALWLARLLGAGGTVSVIYIF). At 89–355 (GNNAVDENGA…SRLWPRSKQP (267 aa)) the chain is on the mitochondrial intermembrane side. An FCP1 homology domain is found at 145–288 (YYQPPYTLVL…LDLSAFLKTI (144 aa)). Phosphoserine is present on Ser-343.

The protein belongs to the TIM50 family. Component of the TIM23 complex at least composed of TIMM23, TIMM17 (TIMM17A or TIMM17B) and TIMM50; within this complex, directly interacts with TIMM23. The complex interacts with the TIMM44 component of the PAM complex and with DNAJC15.

The protein resides in the mitochondrion inner membrane. Essential component of the TIM23 complex, a complex that mediates the translocation of transit peptide-containing proteins across the mitochondrial inner membrane. Has some phosphatase activity in vitro; however such activity may not be relevant in vivo. In Bos taurus (Bovine), this protein is Mitochondrial import inner membrane translocase subunit TIM50 (TIMM50).